Consider the following 507-residue polypeptide: O-fucosyltransferase 30 (507 aa).

Residues 26–46 traverse the membrane as a helical; Signal-anchor for type II membrane protein segment; the sequence is AIFLCSVSILVVFFIVVFFIT. 4 N-linked (GlcNAc...) asparagine glycosylation sites follow: Asn110, Asn146, Asn398, and Asn410.

This sequence belongs to the glycosyltransferase GT106 family.

The protein resides in the membrane. The protein operates within glycan metabolism. In Arabidopsis thaliana (Mouse-ear cress), this protein is O-fucosyltransferase 30.